The sequence spans 473 residues: Thermostable beta-glucosidase B (473 aa).

Catalysis depends on glutamate 196, which acts as the Proton donor. Glutamate 378 (nucleophile) is an active-site residue.

Belongs to the glycosyl hydrolase 1 family.

It is found in the cytoplasm. The catalysed reaction is Hydrolysis of terminal, non-reducing beta-D-glucosyl residues with release of beta-D-glucose.. This Thermobispora bispora (Microbispora bispora) protein is Thermostable beta-glucosidase B (bglB).